The primary structure comprises 123 residues: Small ribosomal subunit protein uS12 (123 aa).

Residue D89 is modified to 3-methylthioaspartic acid. Positions 102–123 (LDTSGVQDRRQRRSKYGAKRPK) are disordered. Over residues 111–123 (RQRRSKYGAKRPK) the composition is skewed to basic residues.

Belongs to the universal ribosomal protein uS12 family. Part of the 30S ribosomal subunit. Contacts proteins S8 and S17. May interact with IF1 in the 30S initiation complex.

Its function is as follows. With S4 and S5 plays an important role in translational accuracy. Functionally, interacts with and stabilizes bases of the 16S rRNA that are involved in tRNA selection in the A site and with the mRNA backbone. Located at the interface of the 30S and 50S subunits, it traverses the body of the 30S subunit contacting proteins on the other side and probably holding the rRNA structure together. The combined cluster of proteins S8, S12 and S17 appears to hold together the shoulder and platform of the 30S subunit. This chain is Small ribosomal subunit protein uS12, found in Lawsonia intracellularis (strain PHE/MN1-00).